The sequence spans 54 residues: ATP synthase protein 8 (54 aa).

Residues 8 to 28 (WWIINFFIIWTAILLTLVILV) traverse the membrane as a helical segment.

It belongs to the ATPase protein 8 family. In terms of assembly, F-type ATPases have 2 components, CF(1) - the catalytic core - and CF(0) - the membrane proton channel.

The protein localises to the mitochondrion membrane. In terms of biological role, mitochondrial membrane ATP synthase (F(1)F(0) ATP synthase or Complex V) produces ATP from ADP in the presence of a proton gradient across the membrane which is generated by electron transport complexes of the respiratory chain. F-type ATPases consist of two structural domains, F(1) - containing the extramembraneous catalytic core and F(0) - containing the membrane proton channel, linked together by a central stalk and a peripheral stalk. During catalysis, ATP synthesis in the catalytic domain of F(1) is coupled via a rotary mechanism of the central stalk subunits to proton translocation. Part of the complex F(0) domain. Minor subunit located with subunit a in the membrane. The protein is ATP synthase protein 8 (MT-ATP8) of Paracentrotus lividus (Common sea urchin).